Consider the following 309-residue polypeptide: Olfactory receptor 7A17 (309 aa).

Residues 1–25 (MEPENDTGISEFVLLGLSEEPELQP) lie on the Extracellular side of the membrane. N-linked (GlcNAc...) asparagine glycosylation occurs at asparagine 5. A helical membrane pass occupies residues 26–46 (FLFGLFLSMYLVTVLGNLLII). Over 47-54 (LATISDSH) the chain is Cytoplasmic. The chain crosses the membrane as a helical span at residues 55 to 75 (LHTPMYFFLSNLSFADICFIS). The Extracellular segment spans residues 76–99 (TTIPKMLINIQTQSRVITYAGCIT). A disulfide bridge connects residues cysteine 97 and cysteine 189. Residues 100-120 (QMCFFVLFGGLDSLLLAVMAY) form a helical membrane-spanning segment. Topologically, residues 121–139 (DRFVAICHPLHYTVIMNPR) are cytoplasmic. The chain crosses the membrane as a helical span at residues 140-160 (LCGLLVLASWMIAALNSLSQS). The Extracellular segment spans residues 161–197 (LMVLWLSFCTDLEIPHFFCELNQVIHLACSDTFLNDM). Residues 198–217 (GMYFAAGLLAGGPLVGILCS) traverse the membrane as a helical segment. Topologically, residues 218 to 237 (YSKIVSSIRAISSAQGKYKA) are cytoplasmic. The chain crosses the membrane as a helical span at residues 238 to 258 (FSTCASHLSVVSLFCCTGLGV). Over 259–271 (YLTSAATHNSHTS) the chain is Extracellular. The helical transmembrane segment at 272–292 (ATASVMYTVATPMLNPFIYSL) threads the bilayer. Residues 293-309 (RNKDIKRALKMSFRGKQ) lie on the Cytoplasmic side of the membrane.

This sequence belongs to the G-protein coupled receptor 1 family.

It is found in the cell membrane. Odorant receptor. This chain is Olfactory receptor 7A17 (OR7A17), found in Homo sapiens (Human).